Consider the following 348-residue polypeptide: Xaa-Pro dipeptidase (348 aa).

5 residues coordinate Co(2+): aspartate 209, aspartate 220, histidine 284, glutamate 313, and glutamate 327.

This sequence belongs to the peptidase M24B family. Archaeal-type prolidase subfamily. As to quaternary structure, homodimer. It depends on Co(2+) as a cofactor. Mn(2+) serves as cofactor.

Its subcellular location is the cytoplasm. The enzyme catalyses Xaa-L-Pro dipeptide + H2O = an L-alpha-amino acid + L-proline. Splits dipeptides with a prolyl in the C-terminal position and a nonpolar amino acid at the N-terminal position. In Pyrococcus furiosus (strain ATCC 43587 / DSM 3638 / JCM 8422 / Vc1), this protein is Xaa-Pro dipeptidase (pepQ).